The chain runs to 503 residues: ATP synthase subunit alpha (503 aa).

170–177 is an ATP binding site; it reads GDRQTGKT.

As to quaternary structure, F-type ATPases have 2 components, CF(1) - the catalytic core - and CF(0) - the membrane proton channel. CF(1) has five subunits: alpha(3), beta(3), gamma(1), delta(1), epsilon(1). CF(0) has four main subunits: a(1), b(1), b'(1) and c(9-12).

The protein localises to the cellular thylakoid membrane. It catalyses the reaction ATP + H2O + 4 H(+)(in) = ADP + phosphate + 5 H(+)(out). Its activity is regulated as follows. Inhibited by dicyclohexylcarbodiimide. Functionally, produces ATP from ADP in the presence of a proton gradient across the membrane. The alpha chain is a regulatory subunit. The complex from the organism is particularly stable to disruption and remains functional after 6 hrs at 55 degrees Celsius. The sequence is that of ATP synthase subunit alpha from Thermosynechococcus vestitus (strain NIES-2133 / IAM M-273 / BP-1).